Reading from the N-terminus, the 786-residue chain is Sucrose synthase (786 aa).

A GT-B glycosyltransferase region spans residues 259–736; it reads MIFSLVVLSP…ALKRVEERYN (478 aa).

The protein belongs to the glycosyltransferase 1 family. Homotetramer.

It carries out the reaction an NDP-alpha-D-glucose + D-fructose = a ribonucleoside 5'-diphosphate + sucrose + H(+). In terms of biological role, catalyzes the reversible conversion of sucrose and a nucleotide disphosphate (NDP) into fructose and NDP-glucose; although the reaction is freely reversible in vitro, the physiological reaction seems to be sucrose cleavage. Unlike characterized plant enzymes prefers ADP as a cosubstrate, whereas plants prefer UDP. Its preference for ADP over UDP suggests it may directly link sucrose and glycogen metabolism. In Denitrovibrio acetiphilus (strain DSM 12809 / NBRC 114555 / N2460), this protein is Sucrose synthase.